The sequence spans 366 residues: Aminomethyltransferase (366 aa).

It belongs to the GcvT family. The glycine cleavage system is composed of four proteins: P, T, L and H.

The catalysed reaction is N(6)-[(R)-S(8)-aminomethyldihydrolipoyl]-L-lysyl-[protein] + (6S)-5,6,7,8-tetrahydrofolate = N(6)-[(R)-dihydrolipoyl]-L-lysyl-[protein] + (6R)-5,10-methylene-5,6,7,8-tetrahydrofolate + NH4(+). In terms of biological role, the glycine cleavage system catalyzes the degradation of glycine. The sequence is that of Aminomethyltransferase from Bacillus mycoides (strain KBAB4) (Bacillus weihenstephanensis).